The chain runs to 746 residues: GTPase-activating protein GYP7 (746 aa).

2 positions are modified to phosphoserine: S265 and S339. Residues 385–633 form the Rab-GAP TBC domain; that stretch reads LENDSLRGKV…HIWENFWTFY (249 aa). Positions 470–505 are disordered; the sequence is TIDGLPPPPQQLPANENNSTSPESANDESDDADDGV. The segment covering 481–491 has biased composition (polar residues); sequence LPANENNSTSP.

The protein localises to the cytoplasm. Functionally, GTPase-activating protein (GAP) that most effectively accelerates the intrinsic GTPase activity of Ypt/Rab-type GTPase YPT7 involved in vacuole docking and fusion. It is also active, but to a lesser extent, on YPT31, YPT32, YPT1, YPT6 and SEC4. Provides a catalytic arginine (arginine finger) in trans to accelerate the GTP hydrolysis rate of the substrate GTPase. The chain is GTPase-activating protein GYP7 (GYP7) from Saccharomyces cerevisiae (strain ATCC 204508 / S288c) (Baker's yeast).